Consider the following 303-residue polypeptide: 2-dehydropantoate 2-reductase (303 aa).

Residues 7 to 12 (GCGALG), Asn98, and Ala122 contribute to the NADP(+) site. Asn98 contacts substrate. The Proton donor role is filled by Lys176. 4 residues coordinate substrate: Asn180, Asn184, Asn194, and Ser244. NADP(+) is bound at residue Glu256.

The protein belongs to the ketopantoate reductase family. As to quaternary structure, monomer.

The protein localises to the cytoplasm. The catalysed reaction is (R)-pantoate + NADP(+) = 2-dehydropantoate + NADPH + H(+). Its pathway is cofactor biosynthesis; (R)-pantothenate biosynthesis; (R)-pantoate from 3-methyl-2-oxobutanoate: step 2/2. In terms of biological role, catalyzes the NADPH-dependent reduction of ketopantoate into pantoic acid. The chain is 2-dehydropantoate 2-reductase (panE) from Salmonella typhi.